We begin with the raw amino-acid sequence, 703 residues long: Elongation factor G (703 aa).

Positions 10-286 (NKVRNIGIMA…AVVKFLPSPL (277 aa)) constitute a tr-type G domain. Residues 19–26 (AHIDAGKT), 83–87 (DTPGH), and 137–140 (NKLD) each bind GTP.

This sequence belongs to the TRAFAC class translation factor GTPase superfamily. Classic translation factor GTPase family. EF-G/EF-2 subfamily.

It localises to the cytoplasm. Functionally, catalyzes the GTP-dependent ribosomal translocation step during translation elongation. During this step, the ribosome changes from the pre-translocational (PRE) to the post-translocational (POST) state as the newly formed A-site-bound peptidyl-tRNA and P-site-bound deacylated tRNA move to the P and E sites, respectively. Catalyzes the coordinated movement of the two tRNA molecules, the mRNA and conformational changes in the ribosome. In Nocardioides sp. (strain ATCC BAA-499 / JS614), this protein is Elongation factor G.